A 290-amino-acid polypeptide reads, in one-letter code: ATP synthase gamma chain (290 aa).

It belongs to the ATPase gamma chain family. In terms of assembly, F-type ATPases have 2 components, CF(1) - the catalytic core - and CF(0) - the membrane proton channel. CF(1) has five subunits: alpha(3), beta(3), gamma(1), delta(1), epsilon(1). CF(0) has three main subunits: a, b and c.

It localises to the cell membrane. Produces ATP from ADP in the presence of a proton gradient across the membrane. The gamma chain is believed to be important in regulating ATPase activity and the flow of protons through the CF(0) complex. This Heliobacterium modesticaldum (strain ATCC 51547 / Ice1) protein is ATP synthase gamma chain.